The chain runs to 665 residues: Phenol hydroxylase (665 aa).

FAD contacts are provided by residues 18-19, 43-45, 51-56, glutamine 118, tyrosine 290, aspartate 358, and 368-372; these read PA, DKR, NGQADG, and GQGMN. Residue aspartate 55 coordinates substrate. Tyrosine 290 lines the substrate pocket.

It belongs to the PheA/TfdB FAD monooxygenase family. As to quaternary structure, homodimer. It depends on FAD as a cofactor.

The catalysed reaction is phenol + NADPH + O2 + H(+) = catechol + NADP(+) + H2O. Its pathway is aromatic compound metabolism; phenol degradation. Inhibited by excess phenol. Heavy metals such AsCuSO(4), AgNO(3), or HgCl(2) severely inhibit activity. Hydroxylates phenol to catechol. Phenol is the best substrate, but the enzyme also accepts isomeric diphenols, hydroxyl-, amino-, halogen- or methyl-substituted phenols and, to a lesser degree, cresols. This Cutaneotrichosporon cutaneum (Yeast) protein is Phenol hydroxylase.